Here is a 280-residue protein sequence, read N- to C-terminus: Ribosomal RNA small subunit methyltransferase A (280 aa).

S-adenosyl-L-methionine-binding residues include His13, Leu15, Gly40, Glu61, Asp85, and Asn105.

This sequence belongs to the class I-like SAM-binding methyltransferase superfamily. rRNA adenine N(6)-methyltransferase family. RsmA subfamily.

It is found in the cytoplasm. It catalyses the reaction adenosine(1518)/adenosine(1519) in 16S rRNA + 4 S-adenosyl-L-methionine = N(6)-dimethyladenosine(1518)/N(6)-dimethyladenosine(1519) in 16S rRNA + 4 S-adenosyl-L-homocysteine + 4 H(+). Functionally, specifically dimethylates two adjacent adenosines (A1518 and A1519) in the loop of a conserved hairpin near the 3'-end of 16S rRNA in the 30S particle. May play a critical role in biogenesis of 30S subunits. The polypeptide is Ribosomal RNA small subunit methyltransferase A (Phocaeicola vulgatus (strain ATCC 8482 / DSM 1447 / JCM 5826 / CCUG 4940 / NBRC 14291 / NCTC 11154) (Bacteroides vulgatus)).